The primary structure comprises 90 residues: Neuropeptide-like 3 (90 aa).

The first 16 residues, 1–16 (MFKLCVFVALLSLAAA), serve as a signal peptide directing secretion. 2 consecutive propeptides follow at residues 17 to 54 (APAP…LAPQ) and 67 to 79 (AITQ…LLIK). Residue Ile89 is modified to Isoleucine amide.

It is found in the secreted. The chain is Neuropeptide-like 3 (Nplp3) from Drosophila melanogaster (Fruit fly).